The sequence spans 664 residues: Phosphomethylpyrimidine synthase (664 aa).

Polar residues-rich tracts occupy residues 1–10 (MSTEPLSINP) and 17–27 (SATQEPSTSSK). Residues 1–37 (MSTEPLSINPLSAKPLSATQEPSTSSKPSRREQRAAA) form a disordered region. Substrate contacts are provided by residues Asn-261, Met-290, Tyr-319, His-355, 375–377 (SRG), 416–419 (DGLR), and Glu-455. His-459 contributes to the Zn(2+) binding site. Tyr-482 contributes to the substrate binding site. His-523 lines the Zn(2+) pocket. [4Fe-4S] cluster-binding residues include Cys-603, Cys-606, and Cys-611.

It belongs to the ThiC family. Homodimer. The cofactor is [4Fe-4S] cluster.

It catalyses the reaction 5-amino-1-(5-phospho-beta-D-ribosyl)imidazole + S-adenosyl-L-methionine = 4-amino-2-methyl-5-(phosphooxymethyl)pyrimidine + CO + 5'-deoxyadenosine + formate + L-methionine + 3 H(+). The protein operates within cofactor biosynthesis; thiamine diphosphate biosynthesis. Catalyzes the synthesis of the hydroxymethylpyrimidine phosphate (HMP-P) moiety of thiamine from aminoimidazole ribotide (AIR) in a radical S-adenosyl-L-methionine (SAM)-dependent reaction. This is Phosphomethylpyrimidine synthase from Pectobacterium atrosepticum (strain SCRI 1043 / ATCC BAA-672) (Erwinia carotovora subsp. atroseptica).